The primary structure comprises 849 residues: Thrombospondin type-1 domain-containing protein 1 (849 aa).

The first 24 residues, 1–24 (MKQTLKDFSNLLLVVLCDYVLGEA), serve as a signal peptide directing secretion. The Extracellular portion of the chain corresponds to 25-413 (EHLVLGEPGH…QPQAPVKSNN (389 aa)). N-linked (GlcNAc...) asparagine glycans are attached at residues N39, N50, N55, N66, N77, N106, and N303. Residues 340–393 (IETWGLWQPWSQCSASCGDGVRERRRVCLTSSPSRPGCPGMSSETSPCSLEDCA) enclose the TSP type-1 domain. 3 cysteine pairs are disulfide-bonded: C352-C387, C356-C392, and C367-C377. The chain crosses the membrane as a helical span at residues 414–434 (VVTVTGISLCLFIIVATVLIT). The Cytoplasmic portion of the chain corresponds to 435-849 (LWRKLGRAPK…STLSVEKLVI (415 aa)). S463 is subject to Phosphoserine. Disordered regions lie at residues 472-516 (SEPR…SESF), 595-799 (KSPF…KCQS), and 828-849 (GYFG…KLVI). The span at 479–493 (SDAGDGPAGSPGDPG) shows a compositional bias: low complexity. Positions 636 to 651 (SQVRSHSRGSHFRRTA) are enriched in basic residues. The segment covering 652 to 666 (SFHEARQARPFRERS) has biased composition (basic and acidic residues). A compositionally biased stretch (pro residues) spans 720 to 732 (SPLPKPHSLGPPP).

In terms of assembly, part of a complex composed of THSD1, PTK2/FAK1, TLN1 and VCL. Interacts with TLN1.

It localises to the endosome membrane. The protein resides in the cell junction. It is found in the focal adhesion. Is a positive regulator of nascent focal adhesion assembly, involved in the modulation of endothelial cell attachment to the extracellular matrix. The chain is Thrombospondin type-1 domain-containing protein 1 (THSD1) from Bos taurus (Bovine).